A 342-amino-acid chain; its full sequence is Prenyl transferase penC (342 aa).

The helical transmembrane segment at 17-37 threads the bilayer; sequence LSYLTLTVGALALVVVLYISI. His-110 is a binding site for isopentenyl diphosphate. Residues Asp-117 and Asp-121 each coordinate Mg(2+). A dimethylallyl diphosphate-binding site is contributed by Arg-126. N-linked (GlcNAc...) asparagine glycosylation occurs at Asn-154. Lys-210 is a binding site for dimethylallyl diphosphate.

This sequence belongs to the FPP/GGPP synthase family.

It localises to the membrane. It functions in the pathway secondary metabolite biosynthesis. Functionally, prenyl transferase; part of the gene cluster that mediates the biosynthesis of the indole diterpenes penitrems. The geranylgeranyl diphosphate (GGPP) synthase penG catalyzes the first step in penitrem biosynthesis via conversion of farnesyl pyrophosphate and isopentyl pyrophosphate into geranylgeranyl pyrophosphate (GGPP). Condensation of indole-3-glycerol phosphate with GGPP by the prenyl transferase penC then forms 3-geranylgeranylindole (3-GGI). Epoxidation by the FAD-dependent monooxygenase penM leads to a epoxidized-GGI that is substrate of the terpene cyclase penB for cyclization to yield paspaline. Paspaline is subsequently converted to 13-desoxypaxilline by the cytochrome P450 monooxygenase penP, the latter being then converted to paxilline by the cytochrome P450 monooxygenase penQ. Paxilline is converted to beta-paxitriol via C-10 ketoreduction by the short-chain dehydrogenase PC-15 which can be monoprenylated at the C-20 by the indole diterpene prenyltransferase penD. A two-step elimination (acetylation and elimination) process performed by the O-acetyltransferase PC-16 and the P.simplicissimum ptmI-ortholog not yet identified in P.crustosum, leads to the production of the prenylated form of penijanthine. The FAD-linked oxidoreductase ptmO then converts the prenylated form of penijanthine into PC-M5 which is in turn transformed into PC-M4 by the aromatic dimethylallyltransferase PC-22. A series of oxidation steps involving 4 cytochrome P450 monooxygenases (PC-21, PC-05, PC-23, PC-20) and a FAD-dependent monooxygenase (PC-14) are required for the transformation of PC-M4 to penitrems A and E. Synthesis of these final products is proposed to proceed via penitrems D and C (PC-21, PC-05, PC-14) and penitrems B and F (PC-21, PC-05, PC-14, PC-23). The protein is Prenyl transferase penC of Penicillium crustosum (Blue mold fungus).